The primary structure comprises 940 residues: UvrABC system protein A (940 aa).

31-38 (GLSGSGKS) contacts ATP. Residues 252–279 (CPHCGYSMRELEPRLFSFNNPAGACPTC) form a C4-type zinc finger. ABC transporter domains are found at residues 309-586 (WDQK…PNSL) and 606-936 (KDAK…RFLK). An ATP-binding site is contributed by 639–646 (GVSGSGKS). The C4-type zinc finger occupies 739–765 (CEACQGDGVIKVEMHFLPDVYVPCDVC).

Belongs to the ABC transporter superfamily. UvrA family. Forms a heterotetramer with UvrB during the search for lesions.

The protein localises to the cytoplasm. In terms of biological role, the UvrABC repair system catalyzes the recognition and processing of DNA lesions. UvrA is an ATPase and a DNA-binding protein. A damage recognition complex composed of 2 UvrA and 2 UvrB subunits scans DNA for abnormalities. When the presence of a lesion has been verified by UvrB, the UvrA molecules dissociate. The protein is UvrABC system protein A of Vibrio cholerae serotype O1 (strain ATCC 39315 / El Tor Inaba N16961).